The sequence spans 513 residues: Maturase K (513 aa).

This sequence belongs to the intron maturase 2 family. MatK subfamily.

The protein localises to the plastid. It is found in the chloroplast. Usually encoded in the trnK tRNA gene intron. Probably assists in splicing its own and other chloroplast group II introns. The polypeptide is Maturase K (Cynodon dactylon (Bermuda grass)).